The following is a 327-amino-acid chain: 2-keto-3-deoxygluconate permease (327 aa).

The next 10 membrane-spanning stretches (helical) occupy residues 10-30 (IPGG…TFSP), 42-62 (GMIT…GASI), 73-93 (KSGT…AIAS), 95-115 (IIPE…LALV), 139-159 (AGAF…IILG), 163-183 (IASF…VGFA), 199-219 (VQTL…LTVI), 224-244 (LLGI…LIIA), 254-274 (TAGI…VLIA), and 289-309 (SLVA…TSIW).

This sequence belongs to the KdgT transporter family.

It localises to the cell inner membrane. The enzyme catalyses 2-dehydro-3-deoxy-D-gluconate(in) + H(+)(in) = 2-dehydro-3-deoxy-D-gluconate(out) + H(+)(out). In terms of biological role, catalyzes the proton-dependent uptake of 2-keto-3-deoxygluconate (KDG) into the cell. This chain is 2-keto-3-deoxygluconate permease, found in Escherichia coli O157:H7.